The primary structure comprises 372 residues: 4-hydroxy-3-methylbut-2-en-1-yl diphosphate synthase (flavodoxin) (372 aa).

[4Fe-4S] cluster contacts are provided by Cys-270, Cys-273, Cys-305, and Glu-312.

This sequence belongs to the IspG family. The cofactor is [4Fe-4S] cluster.

It carries out the reaction (2E)-4-hydroxy-3-methylbut-2-enyl diphosphate + oxidized [flavodoxin] + H2O + 2 H(+) = 2-C-methyl-D-erythritol 2,4-cyclic diphosphate + reduced [flavodoxin]. It participates in isoprenoid biosynthesis; isopentenyl diphosphate biosynthesis via DXP pathway; isopentenyl diphosphate from 1-deoxy-D-xylulose 5-phosphate: step 5/6. In terms of biological role, converts 2C-methyl-D-erythritol 2,4-cyclodiphosphate (ME-2,4cPP) into 1-hydroxy-2-methyl-2-(E)-butenyl 4-diphosphate. The sequence is that of 4-hydroxy-3-methylbut-2-en-1-yl diphosphate synthase (flavodoxin) from Escherichia coli (strain SMS-3-5 / SECEC).